The following is a 470-amino-acid chain: Diaminobutyrate--2-oxoglutarate aminotransferase (470 aa).

Lys304 carries the post-translational modification N6-(pyridoxal phosphate)lysine.

Belongs to the class-III pyridoxal-phosphate-dependent aminotransferase family. The cofactor is pyridoxal 5'-phosphate.

The enzyme catalyses L-2,4-diaminobutanoate + 2-oxoglutarate = L-aspartate 4-semialdehyde + L-glutamate. It participates in siderophore biosynthesis; rhizobactin biosynthesis. The chain is Diaminobutyrate--2-oxoglutarate aminotransferase (rhbA) from Rhizobium meliloti (strain 1021) (Ensifer meliloti).